The following is a 234-amino-acid chain: Zinc finger FYVE domain-containing protein 21 (234 aa).

The FYVE-type zinc finger occupies 44–104 (DKECRRCMQC…QCAECALVSL (61 aa)). Cysteine 50, cysteine 53, cysteine 66, cysteine 69, cysteine 74, cysteine 77, cysteine 96, and cysteine 99 together coordinate Zn(2+). Positions 107–234 (AEFYDKQLKV…AKLLYESRDQ (128 aa)) are PH-like.

As to quaternary structure, interacts with PTK2/FAK1.

Its subcellular location is the cell junction. The protein resides in the focal adhesion. It localises to the cytoplasmic vesicle. It is found in the endosome. Functionally, plays a role in cell adhesion, and thereby in cell motility which requires repeated formation and disassembly of focal adhesions. Regulates microtubule-induced PTK2/FAK1 dephosphorylation, an event important for focal adhesion disassembly, as well as integrin beta-1/ITGB1 cell surface expression. The sequence is that of Zinc finger FYVE domain-containing protein 21 (ZFYVE21) from Homo sapiens (Human).